The following is a 618-amino-acid chain: Mitochondrial Rho GTPase 2 (618 aa).

Residues 1 to 592 (MRRDVRILLL…ELHPSSFWLR (592 aa)) lie on the Cytoplasmic side of the membrane. The Miro 1 domain maps to 2–168 (RRDVRILLLG…FYYAQKAVLH (167 aa)). GTP is bound by residues Gly16, Lys17, Thr18, and Ser19. Thr18 contributes to the Mg(2+) binding site. Mg(2+) is bound by residues Pro35 and Asp57. Ser59 lines the GTP pocket. Residue Lys96 forms a Glycyl lysine isopeptide (Lys-Gly) (interchain with G-Cter in ubiquitin) linkage. Residues Asn118, Lys119, Asp121, Ala149, and Lys150 each contribute to the GTP site. Lys119 participates in a covalent cross-link: Glycyl lysine isopeptide (Lys-Gly) (interchain with G-Cter in ubiquitin). A Glycyl lysine isopeptide (Lys-Gly) (interchain with G-Cter in ubiquitin) cross-link involves residue Lys164. EF-hand domains are found at residues 184–219 (ACAQ…CFGH) and 304–339 (LGYQ…FPAA). Residues Asp197, Asp199, Asp201, Glu208, Asp317, Asp319, Asp321, and Glu328 each coordinate Ca(2+). The Miro 2 domain maps to 414–576 (RSVLLCKVVG…FTQLATMAAF (163 aa)). GTP-binding residues include Gly426, Gly428, Lys429, Ser430, and Ala431. The GDP site is built by Gly426, Gly428, Lys429, Ser430, and Ala431. Ser430 contributes to the Mg(2+) binding site. Glu471 serves as a coordination point for Mg(2+). GTP is bound by residues Lys525, Asp527, and Cys556. GDP contacts are provided by Lys525, Asp527, and Cys556. The helical; Anchor for type IV membrane protein transmembrane segment at 593 to 615 (GLLGVVGAAVAAVLSFSLYRVLV) threads the bilayer. At 616-618 (KSQ) the chain is on the mitochondrial intermembrane side.

This sequence belongs to the mitochondrial Rho GTPase family. In terms of assembly, homodimer. Interacts with the kinesin-binding proteins TRAK1/OIP106 and TRAK2/GRIF1, forming a link between mitochondria and the trafficking apparatus of the microtubules. Interacts with ARMCX3. Found in a complex with KIF5B, OGT, RHOT1 and TRAK1. In terms of processing, ubiquitinated by PRKN in a PINK1-dependent manner, leading to its degradation. As to expression, ubiquitously expressed. Highly expressed in heart, liver, skeletal muscle, kidney and pancreas.

The protein resides in the mitochondrion outer membrane. The enzyme catalyses GTP + H2O = GDP + phosphate + H(+). The catalysed reaction is ATP + H2O = ADP + phosphate + H(+). It carries out the reaction UTP + H2O = UDP + phosphate + H(+). Functionally, atypical mitochondrial nucleoside-triphosphatase (NTPase) involved in mitochondrial trafficking. Probably involved in control of anterograde transport of mitochondria and their subcellular distribution. Can hydrolyze GTP. Can hydrolyze ATP and UTP. This chain is Mitochondrial Rho GTPase 2 (RHOT2), found in Homo sapiens (Human).